The sequence spans 548 residues: Membrane protein insertase YidC (548 aa).

The chain crosses the membrane as a helical span at residues 6 to 26; sequence NLLVIALLFVSFMIWQAWEQD. The interval 28–56 is disordered; it reads NPQPQTQQTTQTTTTAAGSAADQGVPASG. A compositionally biased stretch (low complexity) spans 29 to 42; the sequence is PQPQTQQTTQTTTT. 4 helical membrane-spanning segments follow: residues 350 to 370, 424 to 444, 458 to 478, and 499 to 519; these read FVGN…GIMY, FPLI…MGSI, LSAQ…MFFI, and PVIF…YYIV.

Belongs to the OXA1/ALB3/YidC family. Type 1 subfamily. As to quaternary structure, interacts with the Sec translocase complex via SecD. Specifically interacts with transmembrane segments of nascent integral membrane proteins during membrane integration.

The protein resides in the cell inner membrane. Required for the insertion and/or proper folding and/or complex formation of integral membrane proteins into the membrane. Involved in integration of membrane proteins that insert both dependently and independently of the Sec translocase complex, as well as at least some lipoproteins. Aids folding of multispanning membrane proteins. The protein is Membrane protein insertase YidC of Salmonella typhimurium (strain LT2 / SGSC1412 / ATCC 700720).